The following is a 58-amino-acid chain: Transactivator protein ORF121 (58 aa).

Stimulates the expression of 39k gene most probably by increasing IE1 expression. The sequence is that of Transactivator protein ORF121 (AC121) from Lepidoptera (butterflies and moths).